Here is a 249-residue protein sequence, read N- to C-terminus: Polyhedrin (249 aa).

This sequence belongs to the polyhedrin family.

Major component of the virus occlusion bodies, which are large proteinaceous structures (polyhedra), that protect the virus from the outside environment for extended periods until they are ingested by insect larvae. The protein is Polyhedrin (PH) of Lepidoptera (butterflies and moths).